A 95-amino-acid polypeptide reads, in one-letter code: Auxin-responsive protein SAUR27 (95 aa).

This sequence belongs to the ARG7 family. As to quaternary structure, interacts with PP2C-D1. Higher expression in thermo-responsive cultivars (e.g. cv. Alst-1, cv. Ang-0 and cv. Com-0) than in low thermo-responsive cultivars (e.g. cv. Dja-1, cv. El-0 and cv. Kon).

The protein resides in the cell membrane. Functions as a positive effector of cell expansion through modulation of auxin transport. Involved in thermo-responsiveness of plant architecture. Enhances plasma membrane H(+)-ATPase. This Arabidopsis thaliana (Mouse-ear cress) protein is Auxin-responsive protein SAUR27.